Reading from the N-terminus, the 1066-residue chain is Isoleucine--tRNA ligase (1066 aa).

The 'HIGH' region motif lies at 49–59 (PYVSGAIHLGT). The short motif at 625–629 (KMSKS) is the 'KMSKS' region element. Lys-628 provides a ligand contact to ATP.

It belongs to the class-I aminoacyl-tRNA synthetase family. IleS type 2 subfamily. Monomer. Requires Zn(2+) as cofactor.

The protein localises to the cytoplasm. The catalysed reaction is tRNA(Ile) + L-isoleucine + ATP = L-isoleucyl-tRNA(Ile) + AMP + diphosphate. Functionally, catalyzes the attachment of isoleucine to tRNA(Ile). As IleRS can inadvertently accommodate and process structurally similar amino acids such as valine, to avoid such errors it has two additional distinct tRNA(Ile)-dependent editing activities. One activity is designated as 'pretransfer' editing and involves the hydrolysis of activated Val-AMP. The other activity is designated 'posttransfer' editing and involves deacylation of mischarged Val-tRNA(Ile). The sequence is that of Isoleucine--tRNA ligase from Pyrococcus furiosus (strain ATCC 43587 / DSM 3638 / JCM 8422 / Vc1).